The following is a 357-amino-acid chain: MQPTVLLILMTSCLTYQVIADKPKGNHLHSRPERSPIVLFSDAPHAAASPADENDNFPVLKTANQYEDNNSATFSHLEEKHDFAEKQSTGDDEESVILNRVTGEVLSDTVDGSQGHLEPKRFNEFVGKRNTLPEEAGSFDADSQPGSLDTVRILAGLSNFGQPQIIDQGNMKNHRTLKNMIHNLYNTMNEDEASKRQYEFVGKRSYDFVGKRTYDFLGKRSPYYFLGKRYDFIGKRSPYDFIGKKNYDFVGKRSPYDFVGKRNQGVFTVSPSSTKISFDDNYLPYLSSVDAGDLSDVNKRYAEFLGKRKRTAEQDETSQRSNERLVALLQNTGFRKRLSRMLQNQRLVEHYPEFIGK.

Positions 1-17 (MQPTVLLILMTSCLTYQ) are cleaved as a signal peptide. A propeptide spanning residues 18 to 119 (VIADKPKGNH…VDGSQGHLEP (102 aa)) is cleaved from the precursor. The residue at position 123 (N123) is a D-asparagine. V126 is modified (valine amide). The propeptide occupies 130–194 (NTLPEEAGSF…YNTMNEDEAS (65 aa)). V201 and V209 each carry valine amide. L217 and L226 each carry leucine amide. Isoleucine amide is present on residues I233 and I242. Valine amide occurs at positions 250 and 259. The propeptide occupies 263–298 (NQGVFTVSPSSTKISFDDNYLPYLSSVDAGDLSDVN). L305 bears the Leucine amide mark. Positions 311–357 (TAEQDETSQRSNERLVALLQNTGFRKRLSRMLQNQRLVEHYPEFIGK) are excised as a propeptide.

Found in central ganglia and the ventricles and atria of the heart.

In terms of biological role, potentiates tetanic contraction of the penis retractor muscle at very low concentrations, and also shows modulatory actions on the activity of the buccal and ventricular muscles and the central ganglionic neurons. This Lissachatina fulica (Giant African land snail) protein is Fulicin peptides.